A 384-amino-acid polypeptide reads, in one-letter code: MDPTCQESPAEDSNNEEDLDSTKAAPRIRDTPEDIVLEAPASGLAFHPTRDLLAAGDVDGDVFVFAYSCQEGETKELWSSGHHLKSCRAVVFSEDGQKLVTVSKDKAIHVLDVEQGQLERRISKAHSAPINSLLLVDENVLVTGDDTGGIRLWDQRKEGPLMDMRQHEEYIADMALDPAKKLLLTASGDGCLGVFNIKRRRFELLSEPQSGDLTSVALMKYGKKVACGSSEGTIYLFNWNGFGATSDRFALRAESIDCMVPVTENLLCTGSTDGIIRAVNILPNRVVGTVGQHAGEPVEELALSHCGHFLASSGHDQRLKFWDMTQLRTVVVDDYRRRKKKGGPLRALSSKAWSTDDFFAGLREDEEEAKAPEEVSGESDDDSD.

The interval 1–33 (MDPTCQESPAEDSNNEEDLDSTKAAPRIRDTPE) is disordered. Residues 9–19 (PAEDSNNEEDL) show a composition bias toward acidic residues. WD repeat units lie at residues 36–75 (VLEAPASGLAFHPTRDLLAAGDVDGDVFVFAYSCQEGETK), 82–121 (HHLKSCRAVVFSEDGQKLVTVSKDKAIHVLDVEQGQLERR), 125–163 (AHSAPINSLLLVDENVLVTGDDTGGIRLWDQRKEGPLMD), 166–205 (QHEEYIADMALDPAKKLLLTASGDGCLGVFNIKRRRFELL), 208–247 (PQSGDLTSVALMKYGKKVACGSSEGTIYLFNWNGFGATSD), 250–289 (ALRAESIDCMVPVTENLLCTGSTDGIIRAVNILPNRVVGT), and 293–332 (HAGEPVEELALSHCGHFLASSGHDQRLKFWDMTQLRTVVV). Residues serine 354 and serine 383 each carry the phosphoserine modification. Residues 362-384 (LREDEEEAKAPEEVSGESDDDSD) form a disordered region. Residues 375-384 (VSGESDDDSD) show a composition bias toward acidic residues.

This sequence belongs to the WD repeat WDR55 family.

It localises to the nucleus. The protein localises to the nucleolus. Its subcellular location is the cytoplasm. Nucleolar protein that acts as a modulator of rRNA synthesis. Plays a central role during organogenesis. The sequence is that of WD repeat-containing protein 55 (Wdr55) from Rattus norvegicus (Rat).